The sequence spans 147 residues: uncharacterized protein (147 aa).

Residues 63 to 79 (LFIVACSAVFATIAYIN) traverse the membrane as a helical segment.

This sequence belongs to the FUN14 family.

Its subcellular location is the membrane. This is an uncharacterized protein from Schizosaccharomyces pombe (strain 972 / ATCC 24843) (Fission yeast).